The sequence spans 135 residues: Large ribosomal subunit protein uL16c (135 aa).

The protein belongs to the universal ribosomal protein uL16 family. Part of the 50S ribosomal subunit.

Its subcellular location is the plastid. It is found in the chloroplast. The polypeptide is Large ribosomal subunit protein uL16c (Morus indica (Mulberry)).